Reading from the N-terminus, the 331-residue chain is Pantothenate kinase (331 aa).

Position 109–116 (109–116 (GSVAVGKS)) interacts with ATP.

Belongs to the prokaryotic pantothenate kinase family.

It is found in the cytoplasm. The catalysed reaction is (R)-pantothenate + ATP = (R)-4'-phosphopantothenate + ADP + H(+). It participates in cofactor biosynthesis; coenzyme A biosynthesis; CoA from (R)-pantothenate: step 1/5. This is Pantothenate kinase from Rhizobium etli (strain CIAT 652).